We begin with the raw amino-acid sequence, 131 residues long: Large ribosomal subunit protein bL17 (131 aa).

It belongs to the bacterial ribosomal protein bL17 family. As to quaternary structure, part of the 50S ribosomal subunit. Contacts protein L32.

The chain is Large ribosomal subunit protein bL17 from Vesicomyosocius okutanii subsp. Calyptogena okutanii (strain HA).